The primary structure comprises 385 residues: MAFRKSNVYLNLVNSYLIDSPQPSSINYWWNMGSLLGLCLVIQILTGIFMAMHYSSNIELAFSSVEHIMRDVQTGWLLRYTHANGASFFFAVMYMHMAKGLYYGSYRSPRTLVWIIGVIIFVATMAAAFLGYCCVYGQMSHWGATVITNLFSAIPFVGKDIVQWLWGGFAVSNPTIQRFFALHYLVPFIIAALVVMHFMALHVHGSSNPLGITGNLDRLPMHGYFIFKDLITVFVFLIIFSLFVFYSPNTLGHPDNYIPGNPMVTPASIVPEWYLLPFYAILRSIPDKLLGVITMFGAILVLLVLPLTDKSVIRGNTFKVISKLFFFLFVFNFILLGVLGSCHVEVPFVQMGQYATFLYFAYFLIFVPIISYIENLLFYIGNNNS.

Helical transmembrane passes span 32–52 (MGSL…FMAM), 76–98 (WLLR…MHMA), 113–133 (VWII…LGYC), and 179–199 (FFAL…MHFM). The heme b site is built by His82 and His96. The heme b site is built by His183 and His197. Residue His202 coordinates a ubiquinone. The next 4 helical transmembrane spans lie at 225 to 245 (FIFK…LFVF), 289 to 309 (LLGV…PLTD), 321 to 341 (ISKL…VLGS), and 348 to 368 (FVQM…IFVP).

Belongs to the cytochrome b family. As to quaternary structure, fungal cytochrome b-c1 complex contains 10 subunits; 3 respiratory subunits, 2 core proteins and 5 low-molecular weight proteins. Cytochrome b-c1 complex is a homodimer. Heme b serves as cofactor.

It is found in the mitochondrion inner membrane. Functionally, component of the ubiquinol-cytochrome c reductase complex (complex III or cytochrome b-c1 complex) that is part of the mitochondrial respiratory chain. The b-c1 complex mediates electron transfer from ubiquinol to cytochrome c. Contributes to the generation of a proton gradient across the mitochondrial membrane that is then used for ATP synthesis. In Monosporozyma servazzii (Yeast), this protein is Cytochrome b (COB).